Here is a 751-residue protein sequence, read N- to C-terminus: Fusarisetin A cluster transcription factor fsa6 (751 aa).

The segment at 1–35 (MADQAQDVRPTEWGPGKTPQGRARLPSSRPREKPQ) is disordered. Residues 38–66 (CNLCRRRKLRCDRQRPCSSCAQRELGLSC) constitute a DNA-binding region (zn(2)-C6 fungal-type). Residues 107–116 (NVNAQDQVGA) show a composition bias toward polar residues. The disordered stretch occupies residues 107 to 153 (NVNAQDQVGATPSPRGQPRGPDYPTPAAVHAPSTNEEPVSAAVSPAD).

Its subcellular location is the nucleus. Its function is as follows. Transcription factor that regulates the expression of the gene cluster that mediates the biosynthesis of fusarisetin A. The polypeptide is Fusarisetin A cluster transcription factor fsa6 (Fusarium sp. (strain FN080326)).